The following is a 128-amino-acid chain: MNLIEQIEQEEIKRLTANKTIPPFAPGDTVIVNVNVVEGNRKRVQAYEGVVIAKRNRGLNSSFIVRKISSGEGVERTFQLYSPLLASIEVKRRGDVRRAKLYYLRERSGKSARIKEKLSFKRKEVAAQ.

Belongs to the bacterial ribosomal protein bL19 family.

In terms of biological role, this protein is located at the 30S-50S ribosomal subunit interface and may play a role in the structure and function of the aminoacyl-tRNA binding site. This chain is Large ribosomal subunit protein bL19, found in Ralstonia nicotianae (strain ATCC BAA-1114 / GMI1000) (Ralstonia solanacearum).